The following is a 606-amino-acid chain: Scavenger receptor class A member 3 (606 aa).

Topologically, residues 1 to 56 (MKVRSAGSDRDVLCVTEEDLAGEDEDMPSFPCTQEGRAGPRCNRCQKNLSLHTSVR) are cytoplasmic. A helical; Signal-anchor for type II membrane protein membrane pass occupies residues 57–77 (ILYLFLTLLLVAVAVLASLVF). Residues 78–606 (RKVDSLSEDI…PGPPGNQSPY (529 aa)) lie on the Extracellular side of the membrane. 10 N-linked (GlcNAc...) asparagine glycosylation sites follow: Asn-115, Asn-182, Asn-224, Asn-257, Asn-313, Asn-337, Asn-365, Asn-400, Asn-430, and Asn-451. Positions 455–606 (IRGVPGPPGP…PGPPGNQSPY (152 aa)) are disordered. Collagen-like domains are found at residues 456 to 558 (RGVP…PGPS) and 559 to 601 (GPQG…GPPG). A compositionally biased stretch (low complexity) spans 497-516 (PQGQPGEPGPVGERGPAGPR). The segment covering 526–535 (GSFGTGGPRG) has biased composition (gly residues). 2 stretches are compositionally biased toward pro residues: residues 548 to 558 (PEGPPGSPGPS) and 591 to 606 (PGLP…QSPY).

The protein resides in the endoplasmic reticulum membrane. Its subcellular location is the golgi apparatus membrane. Its function is as follows. Seems to protect cells by scavenging oxidative molecules or harmful products of oxidation. This Mus musculus (Mouse) protein is Scavenger receptor class A member 3 (Scara3).